A 216-amino-acid chain; its full sequence is 3-isopropylmalate dehydratase small subunit (216 aa).

This sequence belongs to the LeuD family. LeuD type 1 subfamily. In terms of assembly, heterodimer of LeuC and LeuD.

The enzyme catalyses (2R,3S)-3-isopropylmalate = (2S)-2-isopropylmalate. Its pathway is amino-acid biosynthesis; L-leucine biosynthesis; L-leucine from 3-methyl-2-oxobutanoate: step 2/4. Its function is as follows. Catalyzes the isomerization between 2-isopropylmalate and 3-isopropylmalate, via the formation of 2-isopropylmaleate. The polypeptide is 3-isopropylmalate dehydratase small subunit (Albidiferax ferrireducens (strain ATCC BAA-621 / DSM 15236 / T118) (Rhodoferax ferrireducens)).